The following is a 493-amino-acid chain: Tripartite motif-containing protein 5 (493 aa).

Alanine 2 carries the post-translational modification N-acetylalanine. The segment at 15–59 (CPICLELLTQPLSLDCGHSFCQACLTANHEKSMLDKGESSCPVCR) adopts an RING-type zinc-finger fold. Serine 86 carries the post-translational modification Phosphoserine. Residues 90–132 (QKVDHCARHGEKLLLFCQEDGKVICWLCERSQEHRGHHTFLTE) form a B box-type zinc finger. Residues cysteine 95, histidine 98, cysteine 117, and histidine 123 each contribute to the Zn(2+) site. A coiled-coil region spans residues 131 to 240 (TEEVAQECQV…LISDLEHRLQ (110 aa)). Positions 185–198 (FEQLRDILDWEESN) are required for interaction with GABARAP and for autophagy. In terms of domain architecture, B30.2/SPRY spans 281-493 (LKGMLEVFRE…VPMTLCSPSS (213 aa)).

Belongs to the TRIM/RBCC family. In terms of assembly, can form homodimers and homotrimers. In addition to lower-order dimerization, also exhibits a higher-order multimerization and both low- and high-order multimerizations are essential for its restriction activity. Interacts with BTBD1 and BTBD2. Interacts with PSMC4, PSMC5, PSMD7 and HSPA8/HSC70. Interacts (via B30.2/SPRY domain) with HSPA1A/B. Interacts with PSMC2, MAP3K7/TAK1, TAB2 and TAB3. Interacts with SQSTM1. Interacts with TRIM6 and TRIM34. Interacts with ULK1 (phosphorylated form), GABARAP, GABARAPL1, GABARAPL2, MAP1LC3A, MAP1LC3C and BECN1. In terms of processing, degraded in a proteasome-independent fashion in the absence of viral infection but in a proteasome-dependent fashion following exposure to restriction sensitive virus. Post-translationally, autoubiquitinated in a RING finger- and UBE2D2-dependent manner. Monoubiquitinated by TRIM21. Deubiquitinated by Yersinia YopJ. Ubiquitination may not lead to proteasomal degradation.

It is found in the cytoplasm. The protein localises to the nucleus. It catalyses the reaction S-ubiquitinyl-[E2 ubiquitin-conjugating enzyme]-L-cysteine + [acceptor protein]-L-lysine = [E2 ubiquitin-conjugating enzyme]-L-cysteine + N(6)-ubiquitinyl-[acceptor protein]-L-lysine.. It functions in the pathway protein modification; protein ubiquitination. Its function is as follows. Capsid-specific restriction factor that prevents infection from non-host-adapted retroviruses. Blocks viral replication early in the life cycle, after viral entry but before reverse transcription. In addition to acting as a capsid-specific restriction factor, also acts as a pattern recognition receptor that activates innate immune signaling in response to the retroviral capsid lattice. Binding to the viral capsid triggers its E3 ubiquitin ligase activity, and in concert with the heterodimeric ubiquitin conjugating enzyme complex UBE2V1-UBE2N (also known as UBC13-UEV1A complex) generates 'Lys-63'-linked polyubiquitin chains, which in turn are catalysts in the autophosphorylation of the MAP3K7/TAK1 complex (includes TAK1, TAB2, and TAB3). Activation of the MAP3K7/TAK1 complex by autophosphorylation results in the induction and expression of NF-kappa-B and MAPK-responsive inflammatory genes, thereby leading to an innate immune response in the infected cell. Plays a role in regulating autophagy through activation of autophagy regulator BECN1 by causing its dissociation from its inhibitors BCL2 and TAB2. The protein is Tripartite motif-containing protein 5 (TRIM5) of Gorilla gorilla gorilla (Western lowland gorilla).